The primary structure comprises 183 residues: Peptide deformylase (183 aa).

Residues cysteine 90 and histidine 132 each coordinate Fe cation. Residue glutamate 133 is part of the active site. Histidine 136 is a binding site for Fe cation.

The protein belongs to the polypeptide deformylase family. Fe(2+) is required as a cofactor.

It catalyses the reaction N-terminal N-formyl-L-methionyl-[peptide] + H2O = N-terminal L-methionyl-[peptide] + formate. Removes the formyl group from the N-terminal Met of newly synthesized proteins. Requires at least a dipeptide for an efficient rate of reaction. N-terminal L-methionine is a prerequisite for activity but the enzyme has broad specificity at other positions. This Parafrankia sp. (strain EAN1pec) protein is Peptide deformylase.